A 235-amino-acid chain; its full sequence is Aspartate/glutamate leucyltransferase (235 aa).

The protein belongs to the R-transferase family. Bpt subfamily.

The protein localises to the cytoplasm. It carries out the reaction N-terminal L-glutamyl-[protein] + L-leucyl-tRNA(Leu) = N-terminal L-leucyl-L-glutamyl-[protein] + tRNA(Leu) + H(+). The enzyme catalyses N-terminal L-aspartyl-[protein] + L-leucyl-tRNA(Leu) = N-terminal L-leucyl-L-aspartyl-[protein] + tRNA(Leu) + H(+). In terms of biological role, functions in the N-end rule pathway of protein degradation where it conjugates Leu from its aminoacyl-tRNA to the N-termini of proteins containing an N-terminal aspartate or glutamate. This is Aspartate/glutamate leucyltransferase from Pseudomonas fluorescens (strain Pf0-1).